A 152-amino-acid chain; its full sequence is Ninjurin-1 (152 aa).

Met-1 is subject to N-acetylmethionine. Residues 1-10 (MDPGTEEYEL) show a composition bias toward acidic residues. The disordered stretch occupies residues 1–30 (MDPGTEEYELNGDLRPGSPGSPDASPPRWG). Topologically, residues 1-78 (MDPGTEEYEL…EQGNEFAFFV (78 aa)) are extracellular. Positions 16-27 (PGSPGSPDASPP) are enriched in low complexity. Residues Ser-18, Ser-21, and Ser-25 each carry the phosphoserine modification. The segment at 26–37 (PPRWGLRNRPIN) is N-terminal adhesion motif. The tract at residues 40–69 (HYANKKSAAESMLDIALLMANASQLKAVVE) is required to induce plasma membrane rupture. Residues 44–55 (KKSAAESMLDIA) form a helix alpha1 region. A helix alpha2 region spans residues 58–74 (MANASQLKAVVEQGNEF). Residue Asn-60 is glycosylated (N-linked (GlcNAc...) asparagine). A helical membrane pass occupies residues 79–103 (PLVVLISISLVLQIGVGVLLIFLVK). Residues 104–113 (YDLNNPAKHA) lie on the Cytoplasmic side of the membrane. Residues 114–138 (KLDFLNNLATGLVFIIVVVNIFITA) form a helical membrane-spanning segment. The Extracellular segment spans residues 139 to 152 (FGVQKPVMDVAPRQ).

The protein belongs to the ninjurin family. In terms of assembly, homodimer; in absence of death stimuli, forms an inactive homodimer. Homooligomer; in response to death stimuli, homooligomerizes into long, highly branched filaments and large, ring-shaped structures in the membrane. The topology shown in the entry corresponds to the activated form. Post-translationally, cleaved by MMP9 protease to generate the Secreted ninjurin-1 form. N-linked glycosylation is required for homooligomerization.

Its subcellular location is the cell membrane. It localises to the synaptic cell membrane. It is found in the secreted. With respect to regulation, in response to death stimuli, homooligomerizes and disrupts membrane integrity by introducing the hydrophilic faces of alpha1 and alpha2 helices into the hydrophobic membrane. Homooligomerization and ability to mediate plasma membrane rupture is inhibited by glycine; it is unclear whether glycine directly or indirectly inhibits homooligomerization. In normal conditions, NINJ1 is autoinhibited via formation of a homodimer: in the inactive homodimer, the alpha1 and alpha2 helices (residues 44-74) form a single transmembrane region without a kink, in which hydrophilic faces of alpha1 and alpha2 helices are sequestered. Functionally, effector of various programmed cell death, such as pyroptosis and necroptosis, which mediates plasma membrane rupture (cytolysis). Oligomerizes in response to death stimuli and forms ring-like structures on the plasma membrane: acts by cutting and shedding membrane disks, like a cookie cutter, leading to membrane damage and loss that cannot be repaired by the cell. Plasma membrane rupture leads to release intracellular molecules named damage-associated molecular patterns (DAMPs) that propagate the inflammatory response. Mechanistically, mediates plasma membrane rupture by introducing hydrophilic faces of 2 alpha helices into the hydrophobic membrane. Induces plasma membrane rupture downstream of Gasdermin (GSDMA, GSDMB, GSDMC, GSDMD, or GSDME) or MLKL during pyroptosis or necroptosis, respectively. Acts as an effector of PANoptosis downstream of CASP1, CASP4, CASP8 and RIPK3. Also induces plasma membrane rupture in response to cell swelling caused by osmotic stress and ferroptosis downstream of lipid peroxidation. Acts as a regulator of Toll-like receptor 4 (TLR4) signaling triggered by lipopolysaccharide (LPS) during systemic inflammation; directly binds LPS. Involved in leukocyte migration during inflammation by promoting transendothelial migration of macrophages via homotypic binding. Promotes the migration of monocytes across the brain endothelium to central nervous system inflammatory lesions. Also acts as a homophilic transmembrane adhesion molecule involved in various processes such as axonal growth, cell chemotaxis and angiogenesis. Promotes cell adhesion by mediating homophilic interactions via its extracellular N-terminal adhesion motif (N-NAM). Involved in the progression of the inflammatory stress by promoting cell-to-cell interactions between immune cells and endothelial cells. Plays a role in nerve regeneration by promoting maturation of Schwann cells. Acts as a regulator of angiogenesis. Promotes the formation of new vessels by mediating the interaction between capillary pericyte cells and endothelial cells. Promotes osteoclasts development by enhancing the survival of prefusion osteoclasts. Also involved in striated muscle growth and differentiation. Secreted form generated by cleavage, which has chemotactic activity. Acts as an anti-inflammatory mediator by promoting monocyte recruitment, thereby ameliorating atherosclerosis. The sequence is that of Ninjurin-1 from Rattus norvegicus (Rat).